We begin with the raw amino-acid sequence, 1441 residues long: Probable cleavage and polyadenylation specificity factor subunit 1 (1441 aa).

This sequence belongs to the CPSF1 family. In terms of assembly, CPSF is a heterotetramer composed of four distinct subunits 160, 100, 70 and 30 kDa.

It is found in the nucleus. Functionally, CPSF plays a key role in pre-mRNA 3'-end formation, recognizing the AAUAAA signal sequence and interacting with poly(A)polymerase and other factors to bring about cleavage and poly(A) addition. This subunit is involved in the RNA recognition step of the polyadenylation reaction. The polypeptide is Probable cleavage and polyadenylation specificity factor subunit 1 (Oryza sativa subsp. japonica (Rice)).